The following is a 64-amino-acid chain: Translation machinery-associated protein 7 homolog (64 aa).

Positions 1 to 64 (MSGRQGGKAK…GGGIKKSGKK (64 aa)) are disordered. Residues 21–50 (DLSEEDVEFKKKQQEEAKKIKEMAAKAGQR) adopt a coiled-coil conformation. A compositionally biased stretch (basic and acidic residues) spans 28 to 44 (EFKKKQQEEAKKIKEMA). The segment covering 53-64 (LLGGGIKKSGKK) has biased composition (gly residues).

This sequence belongs to the TMA7 family.

The sequence is that of Translation machinery-associated protein 7 homolog from Caenorhabditis elegans.